The sequence spans 250 residues: Triosephosphate isomerase (250 aa).

Position 8 to 10 (8 to 10) interacts with substrate; the sequence is NWK. Residue histidine 93 is the Electrophile of the active site. The active-site Proton acceptor is the glutamate 165. Residues glycine 171 and serine 211 each contribute to the substrate site.

Belongs to the triosephosphate isomerase family. In terms of assembly, homodimer.

Its subcellular location is the cytoplasm. The enzyme catalyses D-glyceraldehyde 3-phosphate = dihydroxyacetone phosphate. The protein operates within carbohydrate biosynthesis; gluconeogenesis. It participates in carbohydrate degradation; glycolysis; D-glyceraldehyde 3-phosphate from glycerone phosphate: step 1/1. Its function is as follows. Involved in the gluconeogenesis. Catalyzes stereospecifically the conversion of dihydroxyacetone phosphate (DHAP) to D-glyceraldehyde-3-phosphate (G3P). The protein is Triosephosphate isomerase of Malacoplasma penetrans (strain HF-2) (Mycoplasma penetrans).